A 129-amino-acid chain; its full sequence is Small ribosomal subunit protein uS11 (129 aa).

It belongs to the universal ribosomal protein uS11 family. As to quaternary structure, part of the 30S ribosomal subunit. Interacts with proteins S7 and S18. Binds to IF-3.

Its function is as follows. Located on the platform of the 30S subunit, it bridges several disparate RNA helices of the 16S rRNA. Forms part of the Shine-Dalgarno cleft in the 70S ribosome. This is Small ribosomal subunit protein uS11 from Lysinibacillus sphaericus (strain C3-41).